Reading from the N-terminus, the 122-residue chain is Large ribosomal subunit protein uL14 (122 aa).

It belongs to the universal ribosomal protein uL14 family. In terms of assembly, part of the 50S ribosomal subunit. Forms a cluster with proteins L3 and L19. In the 70S ribosome, L14 and L19 interact and together make contacts with the 16S rRNA in bridges B5 and B8.

Its function is as follows. Binds to 23S rRNA. Forms part of two intersubunit bridges in the 70S ribosome. This chain is Large ribosomal subunit protein uL14, found in Chloroherpeton thalassium (strain ATCC 35110 / GB-78).